A 314-amino-acid polypeptide reads, in one-letter code: Homoserine kinase (314 aa).

95-105 (PHSRGLGSSAS) is an ATP binding site.

The protein belongs to the GHMP kinase family. Homoserine kinase subfamily.

The protein localises to the cytoplasm. The catalysed reaction is L-homoserine + ATP = O-phospho-L-homoserine + ADP + H(+). The protein operates within amino-acid biosynthesis; L-threonine biosynthesis; L-threonine from L-aspartate: step 4/5. Its function is as follows. Catalyzes the ATP-dependent phosphorylation of L-homoserine to L-homoserine phosphate. This is Homoserine kinase from Rhodococcus opacus (strain B4).